The chain runs to 367 residues: tRNA/tmRNA (uracil-C(5))-methyltransferase (367 aa).

5 residues coordinate S-adenosyl-L-methionine: glutamine 190, tyrosine 218, asparagine 223, glutamate 239, and aspartate 299. Cysteine 324 serves as the catalytic Nucleophile. Catalysis depends on glutamate 358, which acts as the Proton acceptor.

The protein belongs to the class I-like SAM-binding methyltransferase superfamily. RNA M5U methyltransferase family. TrmA subfamily.

It carries out the reaction uridine(54) in tRNA + S-adenosyl-L-methionine = 5-methyluridine(54) in tRNA + S-adenosyl-L-homocysteine + H(+). The catalysed reaction is uridine(341) in tmRNA + S-adenosyl-L-methionine = 5-methyluridine(341) in tmRNA + S-adenosyl-L-homocysteine + H(+). Dual-specificity methyltransferase that catalyzes the formation of 5-methyluridine at position 54 (m5U54) in all tRNAs, and that of position 341 (m5U341) in tmRNA (transfer-mRNA). This chain is tRNA/tmRNA (uracil-C(5))-methyltransferase, found in Musicola paradisiaca (strain Ech703) (Dickeya paradisiaca).